Here is a 69-residue protein sequence, read N- to C-terminus: Cytochrome c oxidase subunit 8A, mitochondrial (69 aa).

Residues methionine 1–glutamine 25 constitute a mitochondrion transit peptide. The SIFI-degron motif lies at serine 2–leucine 19. Residues valine 26 to glycine 36 lie on the Mitochondrial matrix side of the membrane. Residues threonine 37–serine 60 form a helical membrane-spanning segment. The Mitochondrial intermembrane segment spans residues histidine 61–glutamate 69.

The protein belongs to the cytochrome c oxidase VIII family. In terms of assembly, component of the cytochrome c oxidase (complex IV, CIV), a multisubunit enzyme composed of 14 subunits. The complex is composed of a catalytic core of 3 subunits MT-CO1, MT-CO2 and MT-CO3, encoded in the mitochondrial DNA, and 11 supernumerary subunits COX4I, COX5A, COX5B, COX6A, COX6B, COX6C, COX7A, COX7B, COX7C, COX8 and NDUFA4, which are encoded in the nuclear genome. The complex exists as a monomer or a dimer and forms supercomplexes (SCs) in the inner mitochondrial membrane with NADH-ubiquinone oxidoreductase (complex I, CI) and ubiquinol-cytochrome c oxidoreductase (cytochrome b-c1 complex, complex III, CIII), resulting in different assemblies (supercomplex SCI(1)III(2)IV(1) and megacomplex MCI(2)III(2)IV(2)). In response to mitochondrial stress, the precursor protein is ubiquitinated by the SIFI complex in the cytoplasm before mitochondrial import, leading to its degradation. Within the SIFI complex, UBR4 initiates ubiquitin chain that are further elongated or branched by KCMF1.

Its subcellular location is the mitochondrion inner membrane. It participates in energy metabolism; oxidative phosphorylation. Functionally, component of the cytochrome c oxidase, the last enzyme in the mitochondrial electron transport chain which drives oxidative phosphorylation. The respiratory chain contains 3 multisubunit complexes succinate dehydrogenase (complex II, CII), ubiquinol-cytochrome c oxidoreductase (cytochrome b-c1 complex, complex III, CIII) and cytochrome c oxidase (complex IV, CIV), that cooperate to transfer electrons derived from NADH and succinate to molecular oxygen, creating an electrochemical gradient over the inner membrane that drives transmembrane transport and the ATP synthase. Cytochrome c oxidase is the component of the respiratory chain that catalyzes the reduction of oxygen to water. Electrons originating from reduced cytochrome c in the intermembrane space (IMS) are transferred via the dinuclear copper A center (CU(A)) of subunit 2 and heme A of subunit 1 to the active site in subunit 1, a binuclear center (BNC) formed by heme A3 and copper B (CU(B)). The BNC reduces molecular oxygen to 2 water molecules using 4 electrons from cytochrome c in the IMS and 4 protons from the mitochondrial matrix. This is Cytochrome c oxidase subunit 8A, mitochondrial (COX8A) from Eulemur fulvus fulvus (Brown lemur).